The sequence spans 150 residues: Truncated transcription factor CAULIFLOWER A (150 aa).

In terms of domain architecture, MADS-box spans 1–61 (MGRGRVEMKR…GKLFEYSSES (61 aa)). The K-box; partial domain maps to 90 to 150 (QTNWSMEYSR…IRSRKNQLMH (61 aa)).

Homodimer capable of binding to CArG-box sequences. In terms of tissue distribution, expressed in some of the meristems of arrest-stage cauliflower heads.

The protein resides in the nucleus. In terms of biological role, probable transcription factor that promotes early floral meristem identity in synergy with APETALA1, FRUITFULL and LEAFY. Is required subsequently for the transition of an inflorescence meristem into a floral meristem. Seems to be partially redundant to the function of APETALA1. The polypeptide is Truncated transcription factor CAULIFLOWER A (CAL-A) (Brassica oleracea var. botrytis (Cauliflower)).